Here is a 1571-residue protein sequence, read N- to C-terminus: Pentafunctional AROM polypeptide 2 (1571 aa).

Residues Met1–Asn380 are 3-dehydroquinate synthase. NAD(+) contacts are provided by residues Asp44 to Asn46, Glu81 to Lys84, Gly112 to Val114, and Asp117. Arg128 serves as a coordination point for 7-phospho-2-dehydro-3-deoxy-D-arabino-heptonate. Thr137 to Thr138 is a binding site for NAD(+). 7-phospho-2-dehydro-3-deoxy-D-arabino-heptonate is bound by residues Asp144 and Lys150. An NAD(+)-binding site is contributed by Lys159. Asn160 lines the 7-phospho-2-dehydro-3-deoxy-D-arabino-heptonate pocket. NAD(+)-binding positions include Phe177–Thr180 and Asn188. Residue Glu192 coordinates Zn(2+). 7-phospho-2-dehydro-3-deoxy-D-arabino-heptonate is bound by residues Glu192–Lys195 and Lys246. Catalysis depends on Glu256, which acts as the Proton acceptor; for 3-dehydroquinate synthase activity. Residues Arg260–Asn264 and His267 contribute to the 7-phospho-2-dehydro-3-deoxy-D-arabino-heptonate site. His267 provides a ligand contact to Zn(2+). His271 (proton acceptor; for 3-dehydroquinate synthase activity) is an active-site residue. 7-phospho-2-dehydro-3-deoxy-D-arabino-heptonate contacts are provided by His283 and Lys352. Position 283 (His283) interacts with Zn(2+). Residues Val393–Val838 form an EPSP synthase region. The active-site For EPSP synthase activity is the Cys820. A shikimate kinase region spans residues Asn859–Ser1051. Gly866–Thr873 contacts ATP. Residues Leu1052–Glu1273 form a 3-dehydroquinase region. His1175 serves as the catalytic Proton acceptor; for 3-dehydroquinate dehydratase activity. Residue Lys1203 is the Schiff-base intermediate with substrate; for 3-dehydroquinate dehydratase activity of the active site. The shikimate dehydrogenase stretch occupies residues Ala1286 to Lys1571.

The protein in the N-terminal section; belongs to the sugar phosphate cyclases superfamily. Dehydroquinate synthase family. This sequence in the 2nd section; belongs to the EPSP synthase family. It in the 3rd section; belongs to the shikimate kinase family. In the 4th section; belongs to the type-I 3-dehydroquinase family. The protein in the C-terminal section; belongs to the shikimate dehydrogenase family. As to quaternary structure, homodimer. Zn(2+) serves as cofactor.

The protein resides in the cytoplasm. It catalyses the reaction 7-phospho-2-dehydro-3-deoxy-D-arabino-heptonate = 3-dehydroquinate + phosphate. It carries out the reaction 3-dehydroquinate = 3-dehydroshikimate + H2O. The enzyme catalyses shikimate + NADP(+) = 3-dehydroshikimate + NADPH + H(+). The catalysed reaction is shikimate + ATP = 3-phosphoshikimate + ADP + H(+). It catalyses the reaction 3-phosphoshikimate + phosphoenolpyruvate = 5-O-(1-carboxyvinyl)-3-phosphoshikimate + phosphate. It participates in metabolic intermediate biosynthesis; chorismate biosynthesis; chorismate from D-erythrose 4-phosphate and phosphoenolpyruvate: step 2/7. The protein operates within metabolic intermediate biosynthesis; chorismate biosynthesis; chorismate from D-erythrose 4-phosphate and phosphoenolpyruvate: step 3/7. It functions in the pathway metabolic intermediate biosynthesis; chorismate biosynthesis; chorismate from D-erythrose 4-phosphate and phosphoenolpyruvate: step 4/7. Its pathway is metabolic intermediate biosynthesis; chorismate biosynthesis; chorismate from D-erythrose 4-phosphate and phosphoenolpyruvate: step 5/7. It participates in metabolic intermediate biosynthesis; chorismate biosynthesis; chorismate from D-erythrose 4-phosphate and phosphoenolpyruvate: step 6/7. In terms of biological role, the AROM polypeptide catalyzes 5 consecutive enzymatic reactions in prechorismate polyaromatic amino acid biosynthesis. In Talaromyces marneffei (strain ATCC 18224 / CBS 334.59 / QM 7333) (Penicillium marneffei), this protein is Pentafunctional AROM polypeptide 2.